A 565-amino-acid polypeptide reads, in one-letter code: MKSPAPSRPQKMALIPACIFLCFAALSVQAEETPVTPQPPDILLGPLFNDVQNVKLFPDQKTFADAVPNSDPLMILADYRMQQNQSGFDLRHFVNVNFTLPKEGEKYVPPEGQSLREHIDGLWPVLTRSTENTEKWDSLLPLPEPYVVPGGRFREVYYWDNYFTMLGLAESGHWDKVADMVANFAHEINTYGHIPNGNRSYYLSRSQPPFFALMVELLAQHEGDAALKQYLPQMQKEYAYWMDGVENLQAGQQEKRVVKLQDSTLLNRYWDDRDTPRPESWVEDIATAKSNPNRPATEIYRDLRSAAASGWDFSSRWMDNPQQLNTLRTTSIVPVDLNSLMFKMEKILARASKAAGDNAMANQYETLANARQKGIEKYLWNDQQGWYADYDLKSHKVRNQLTAAALFPLYVNAAAKDRANKMATATKTHLLQPGGLNTTSVKSGQQWDAPNGWAPLQWVATEGLQNYGQKEVAMDISWHFLTNVQHTYDREKKLVEKYDVSTTGTGGGGGEYPLQDGFGWTNGVTLKMLDLICPKEQPCDNVPATHPTVKSATTQPSTKEAQPTP.

Residues 1–30 (MKSPAPSRPQKMALIPACIFLCFAALSVQA) form the signal peptide. Residues Arg152, 159–160 (WD), Asn196, 205–207 (RSQ), 277–279 (RPE), and Gly310 each bind substrate. Active-site proton donor/acceptor residues include Asp312 and Glu496. Residue Glu511 coordinates substrate. The tract at residues 540–565 (DNVPATHPTVKSATTQPSTKEAQPTP) is disordered. Positions 548–565 (TVKSATTQPSTKEAQPTP) are enriched in polar residues.

It belongs to the glycosyl hydrolase 37 family. Monomer.

Its subcellular location is the periplasm. It carries out the reaction alpha,alpha-trehalose + H2O = alpha-D-glucose + beta-D-glucose. Provides the cells with the ability to utilize trehalose at high osmolarity by splitting it into glucose molecules that can subsequently be taken up by the phosphotransferase-mediated uptake system. This chain is Periplasmic trehalase, found in Shigella flexneri.